The sequence spans 896 residues: Alanine--tRNA ligase (896 aa).

Zn(2+) is bound by residues His-574, His-578, Cys-677, and His-681.

The protein belongs to the class-II aminoacyl-tRNA synthetase family. Requires Zn(2+) as cofactor.

It is found in the cytoplasm. It catalyses the reaction tRNA(Ala) + L-alanine + ATP = L-alanyl-tRNA(Ala) + AMP + diphosphate. Its function is as follows. Catalyzes the attachment of alanine to tRNA(Ala) in a two-step reaction: alanine is first activated by ATP to form Ala-AMP and then transferred to the acceptor end of tRNA(Ala). Also edits incorrectly charged Ser-tRNA(Ala) and Gly-tRNA(Ala) via its editing domain. This chain is Alanine--tRNA ligase, found in Mycoplasma capricolum subsp. capricolum (strain California kid / ATCC 27343 / NCTC 10154).